The chain runs to 1026 residues: MSNTMPEGYIPRPGKDQTLEAYISEELSKHNLTFNDVLNNEEMMAELSKDDAFMKLKAEFENKDKPEVVEASSNKKEEKVSEPKVEEKKDPEPEKDAPALVVEEVVMDDDDADEVEKPTMEAPKSTVAKLTETQFRIDSSNLMSKIDFTIAYDKLMTVDSFGVEDLVTKSPFYATRLDKPRHMRMDEFCNEFIEPAIPSALGHPNSEGYTDMVGFDWEKNQYLNLYEELGRRSVEAIELDDDANAGDVIIGGVTSLSMIKQVNAIVHDAILPKGRLAYIMAQMRAARCLQFTRVANGQEATPEDKLQAYMDAYMNPTYTRALRIRTPEPRVVTYNKAIDYVMYRLTLNADNDFISPMVQISDSIDVGRGVRSRSYQAATTVMSVIASSHRNLERPMTSARAPAKVITAFTDLVAPPAAEAMQKLGSYCLGGRRAELTVDMTDPILQSTDSVLAPIAAAANLILLDTNRLGNDIKRTLVYRMLSPFYGTGTRAEVDRINFNNIPRIVLTPIPDRRGLHGRLANFIRRQLTKPAYGRMDRNDSRIWRADIQTTPMLPFVPAGGMTPLSMHIGDERLENQAYAPQANELKVSLMDFVKMFDLMHARQGKETYLSSQFSAILTNESSYLYNSISMVMRTMIRGWESLDLLPPLDGAVPGALEMDRTEAFVLPFTGAVSFICYGIEDDGLEYVPWEQRKEIPMPSSFPMLLDMEIRVANELLLEAADPAGRFTRSDMLINQDEFINMAEFIMKKYLTSIDGGEFGTRYRLHWYLFEGIRIHNRTLQTPGIEDLKVARRILDGVKYPEDIATAVYIKIYESVNPIDLVNPDPQRSDYQVYMEEIPADDEILEIKDIVTYRREDGGEDFNFTPYLHSGETFNLDLIRKLAKSIPGDHRYVKVPTKVTVKPVELLDNVDVIAEDFTVALKFKKGVNEMRFEASDIPLYYRWDKFNGRSQLTLDVRVFPDTNVLLDHVMESDPRMGYAPQVLNDGTVGWVSTLSGNVYLEERKVCRREEEVLKSGIDLLIDPYGV.

The interval 60–96 (FENKDKPEVVEASSNKKEEKVSEPKVEEKKDPEPEKD) is disordered.

Its subcellular location is the virion. Functionally, self-assembles to form an icosahedral capsid with a pseudo T=2 symmetry, about 60 nm in diameter, and consisting of 120 VP3 subunits. The capsid encapsulates the genomic RNA. This Micromonas pusilla (Picoplanktonic green alga) protein is Major inner capsid protein VP3 (S3).